Reading from the N-terminus, the 250-residue chain is Hydroxyethylthiazole kinase (250 aa).

M39 contacts substrate. ATP-binding residues include R114 and T159. Residue G186 participates in substrate binding.

The protein belongs to the Thz kinase family. Mg(2+) is required as a cofactor.

The enzyme catalyses 5-(2-hydroxyethyl)-4-methylthiazole + ATP = 4-methyl-5-(2-phosphooxyethyl)-thiazole + ADP + H(+). It participates in cofactor biosynthesis; thiamine diphosphate biosynthesis; 4-methyl-5-(2-phosphoethyl)-thiazole from 5-(2-hydroxyethyl)-4-methylthiazole: step 1/1. Functionally, catalyzes the phosphorylation of the hydroxyl group of 4-methyl-5-beta-hydroxyethylthiazole (THZ). The polypeptide is Hydroxyethylthiazole kinase (Lactococcus lactis subsp. cremoris (strain SK11)).